The sequence spans 260 residues: Glutamate racemase (260 aa).

Residues 7–8 (DS) and 39–40 (YG) each bind substrate. Cys71 serves as the catalytic Proton donor/acceptor. A substrate-binding site is contributed by 72 to 73 (NT). The active-site Proton donor/acceptor is Cys182. 183-184 (TH) provides a ligand contact to substrate.

This sequence belongs to the aspartate/glutamate racemases family.

The catalysed reaction is L-glutamate = D-glutamate. The protein operates within cell wall biogenesis; peptidoglycan biosynthesis. Functionally, provides the (R)-glutamate required for cell wall biosynthesis. The polypeptide is Glutamate racemase (Sulfurihydrogenibium sp. (strain YO3AOP1)).